The following is a 1425-amino-acid chain: Neuropathy target esterase sws (1425 aa).

Topologically, residues 1–34 (MDVLEMLRASASGSYNTIFSDAWCQYVSKQITAT) are lumenal. A helical membrane pass occupies residues 35-55 (VYMYFALVMMSLLFIAWFLYF). Residues 56–1425 (KRMARLRLRD…RSSPNNETKN (1370 aa)) lie on the Cytoplasmic side of the membrane. Position 174–301 (174–301 (IFGHFEKPVF…IRVIQVIMIR (128 aa))) interacts with a nucleoside 3',5'-cyclic phosphate. Polar residues-rich tracts occupy residues 332 to 348 (TMSG…SRQA) and 357 to 366 (SQMNLMQSAV). The disordered stretch occupies residues 332–410 (TMSGPINSQT…NPDGSFHGTT (79 aa)). Positions 367–381 (SGTGSSGVSVTVTRP) are enriched in low complexity. Residues Ser-444 and Ser-453 each carry the phosphoserine modification. A nucleoside 3',5'-cyclic phosphate is bound by residues 482–609 (ELGL…VVRR) and 598–727 (IVLD…HRFL). One can recognise a PNPLA domain in the interval 952–1118 (LVLGGGGARG…VNNLPADVMH (167 aa)). Positions 956–961 (GGGARG) match the GXGXXG motif. Residues 983–987 (GVSIG) carry the GXSXG motif. Ser-985 serves as the catalytic Nucleophile. Asp-1105 functions as the Proton acceptor in the catalytic mechanism. Residues 1105–1107 (DGG) carry the DGA/G motif. Residue Ser-1160 is modified to Phosphoserine. A disordered region spans residues 1330–1425 (LERKTDKSTQ…RSSPNNETKN (96 aa)). Residues 1337–1347 (STQSSPPSNSR) are compositionally biased toward low complexity. Basic and acidic residues predominate over residues 1348 to 1358 (SDMRGKEEARH). The span at 1380–1403 (TKTQTGQEQELQQEQQDQGATAEQ) shows a compositional bias: low complexity. Residues 1404–1416 (LVDKDKEENKENR) are compositionally biased toward basic and acidic residues.

The protein belongs to the NTE family. As to quaternary structure, interacts with Pka-C3; interaction inhibits the catalytic function of Pka-C3 and the esterase activity of sws. Isoform A and isoform B are expressed in the entire brain cortex; cortical cell bodies of adult brain. Sws and Pka-C3 are colocalized in all neurons.

Its subcellular location is the endoplasmic reticulum membrane. The enzyme catalyses a 1-acyl-sn-glycero-3-phosphocholine + H2O = sn-glycerol 3-phosphocholine + a fatty acid + H(+). Functionally, phospholipase B that deacylates intracellular phosphatidylcholine (PtdCho), generating glycerophosphocholine (GroPtdCho). This deacylation occurs at both sn-2 and sn-1 positions of PtdCho. Its specific chemical modification by certain organophosphorus (OP) compounds leads to distal axonopathy. Plays a role in the signaling mechanism between neurons and glia that regulates glia wrapping during development of the adult brain. Essential for membrane lipid homeostasis and cell survival in both neurons and glia of the adult brain. This chain is Neuropathy target esterase sws (sws), found in Drosophila melanogaster (Fruit fly).